A 158-amino-acid polypeptide reads, in one-letter code: NAD(P)H-quinone oxidoreductase subunit J, chloroplastic (158 aa).

It belongs to the complex I 30 kDa subunit family. NDH is composed of at least 16 different subunits, 5 of which are encoded in the nucleus.

It localises to the plastid. The protein resides in the chloroplast thylakoid membrane. The enzyme catalyses a plastoquinone + NADH + (n+1) H(+)(in) = a plastoquinol + NAD(+) + n H(+)(out). It carries out the reaction a plastoquinone + NADPH + (n+1) H(+)(in) = a plastoquinol + NADP(+) + n H(+)(out). Its function is as follows. NDH shuttles electrons from NAD(P)H:plastoquinone, via FMN and iron-sulfur (Fe-S) centers, to quinones in the photosynthetic chain and possibly in a chloroplast respiratory chain. The immediate electron acceptor for the enzyme in this species is believed to be plastoquinone. Couples the redox reaction to proton translocation, and thus conserves the redox energy in a proton gradient. This Jasminum nudiflorum (Winter jasmine) protein is NAD(P)H-quinone oxidoreductase subunit J, chloroplastic.